The primary structure comprises 444 residues: Vacuolar protein sorting-associated protein 4 (444 aa).

Residues 2–80 (GDVNFLQKAI…KEYLDKSKNK (79 aa)) enclose the MIT domain. A disordered region spans residues 79–122 (NKKPVAVGGNKSNSAGSANGAGKSAKEDDEDMDPEDKKRNDSLS). The span at 86–101 (GGNKSNSAGSANGAGK) shows a compositional bias: low complexity. 175 to 182 (GPPGTGKS) contacts ATP.

This sequence belongs to the AAA ATPase family.

Its subcellular location is the prevacuolar compartment membrane. The protein localises to the endosome membrane. It catalyses the reaction ATP + H2O = ADP + phosphate + H(+). In terms of biological role, involved in intracellular protein transport probably out of a prevacuolar endosomal compartment. May be involved in the release of components of the bilayered coat from the endosomal membrane. The association with ESCRT-III complex mediates the ATP-dependent disassembly of the ESCRT-III complex. This is Vacuolar protein sorting-associated protein 4 (vps4) from Dictyostelium discoideum (Social amoeba).